Here is an 80-residue protein sequence, read N- to C-terminus: Large ribosomal subunit protein eL20 (80 aa).

It belongs to the eukaryotic ribosomal protein eL20 family. Part of the 50S ribosomal subunit. Binds 23S rRNA.

In Methanopyrus kandleri (strain AV19 / DSM 6324 / JCM 9639 / NBRC 100938), this protein is Large ribosomal subunit protein eL20.